The following is a 242-amino-acid chain: Ribose-5-phosphate isomerase A (242 aa).

Residues 39-42 (SGST), 95-98 (DGAD), and 108-111 (KGGG) contribute to the substrate site. Glu117 acts as the Proton acceptor in catalysis. Lys135 provides a ligand contact to substrate.

It belongs to the ribose 5-phosphate isomerase family. Homodimer.

It carries out the reaction aldehydo-D-ribose 5-phosphate = D-ribulose 5-phosphate. Its pathway is carbohydrate degradation; pentose phosphate pathway; D-ribose 5-phosphate from D-ribulose 5-phosphate (non-oxidative stage): step 1/1. In terms of biological role, catalyzes the reversible conversion of ribose-5-phosphate to ribulose 5-phosphate. The protein is Ribose-5-phosphate isomerase A of Chlamydia trachomatis serovar L2 (strain ATCC VR-902B / DSM 19102 / 434/Bu).